Here is a 406-residue protein sequence, read N- to C-terminus: Argininosuccinate synthase (406 aa).

8 to 16 contacts ATP; the sequence is AYSGGLDTS. Position 86 (Y86) interacts with L-citrulline. An ATP-binding site is contributed by G116. 3 residues coordinate L-aspartate: T118, N122, and D123. L-citrulline is bound at residue N122. R126, S174, E259, and Y271 together coordinate L-citrulline.

Belongs to the argininosuccinate synthase family. Type 1 subfamily. Homotetramer.

It is found in the cytoplasm. The catalysed reaction is L-citrulline + L-aspartate + ATP = 2-(N(omega)-L-arginino)succinate + AMP + diphosphate + H(+). It participates in amino-acid biosynthesis; L-arginine biosynthesis; L-arginine from L-ornithine and carbamoyl phosphate: step 2/3. The chain is Argininosuccinate synthase from Lacticaseibacillus paracasei (strain ATCC 334 / BCRC 17002 / CCUG 31169 / CIP 107868 / KCTC 3260 / NRRL B-441) (Lactobacillus paracasei).